Consider the following 122-residue polypeptide: UPF0102 protein R00337 (122 aa).

This sequence belongs to the UPF0102 family.

This chain is UPF0102 protein R00337, found in Rhizobium meliloti (strain 1021) (Ensifer meliloti).